Reading from the N-terminus, the 159-residue chain is SsrA-binding protein (159 aa).

A disordered region spans residues 138-159; that stretch reads KRDTLKDKDWQRQKERMMKHSV.

This sequence belongs to the SmpB family.

The protein resides in the cytoplasm. Functionally, required for rescue of stalled ribosomes mediated by trans-translation. Binds to transfer-messenger RNA (tmRNA), required for stable association of tmRNA with ribosomes. tmRNA and SmpB together mimic tRNA shape, replacing the anticodon stem-loop with SmpB. tmRNA is encoded by the ssrA gene; the 2 termini fold to resemble tRNA(Ala) and it encodes a 'tag peptide', a short internal open reading frame. During trans-translation Ala-aminoacylated tmRNA acts like a tRNA, entering the A-site of stalled ribosomes, displacing the stalled mRNA. The ribosome then switches to translate the ORF on the tmRNA; the nascent peptide is terminated with the 'tag peptide' encoded by the tmRNA and targeted for degradation. The ribosome is freed to recommence translation, which seems to be the essential function of trans-translation. This is SsrA-binding protein from Alteromonas mediterranea (strain DSM 17117 / CIP 110805 / LMG 28347 / Deep ecotype).